The primary structure comprises 683 residues: Methionine--tRNA ligase (683 aa).

The 'HIGH' region signature appears at proline 15 to histidine 25. Zn(2+)-binding residues include cysteine 146, cysteine 149, cysteine 159, and cysteine 162. A 'KMSKS' region motif is present at residues lysine 332–serine 336. Position 335 (lysine 335) interacts with ATP. The tRNA-binding domain maps to aspartate 581 to lysine 683.

Belongs to the class-I aminoacyl-tRNA synthetase family. MetG type 1 subfamily. Homodimer. The cofactor is Zn(2+).

The protein resides in the cytoplasm. The enzyme catalyses tRNA(Met) + L-methionine + ATP = L-methionyl-tRNA(Met) + AMP + diphosphate. Functionally, is required not only for elongation of protein synthesis but also for the initiation of all mRNA translation through initiator tRNA(fMet) aminoacylation. The protein is Methionine--tRNA ligase of Histophilus somni (strain 129Pt) (Haemophilus somnus).